The sequence spans 423 residues: Cyclin-dependent kinase 14 (423 aa).

Phosphoserine occurs at positions 32, 49, and 88. The span at 49–64 (SENNACINFKTSSTGK) shows a compositional bias: polar residues. Positions 49 to 87 (SENNACINFKTSSTGKESPKVRRHSSPSSPTSPKFGKAD) are disordered. The region spanning 89-373 (YEKLEKLGEG…AQAALSHEYF (285 aa)) is the Protein kinase domain. ATP-binding positions include 95-103 (LGEGSYATV) and lysine 118. Aspartate 210 serves as the catalytic Proton acceptor. A disordered region spans residues 403–423 (ESMRAFGKNNSYGKSLSNSKH). Over residues 410–423 (KNNSYGKSLSNSKH) the composition is skewed to polar residues.

The protein belongs to the protein kinase superfamily. CMGC Ser/Thr protein kinase family. CDC2/CDKX subfamily. As to quaternary structure, found in a complex with LRP6, CCNY and CAPRIN2 during G2/M stage; CAPRIN2 functions as a scaffold for the complex by binding to CCNY via its N terminus and to CDK14 via its C terminus. Interacts with CCNY; CCNY mediates its recruitment to the plasma membrane and promotes phosphorylation of LRP6. Interacts with CCDN3 and CDKN1A. Interacts with SEPT8. Interacts with 14-3-3 proteina YWHAB, YWHAE, YWHAH and YWHAQ.

The protein localises to the cell membrane. The protein resides in the cytoplasm. Its subcellular location is the nucleus. The enzyme catalyses L-seryl-[protein] + ATP = O-phospho-L-seryl-[protein] + ADP + H(+). It carries out the reaction L-threonyl-[protein] + ATP = O-phospho-L-threonyl-[protein] + ADP + H(+). Serine/threonine-protein kinase activity is promoted by associated cyclins CCDN3 and CCNY and repressed by CDKN1A. Its function is as follows. Serine/threonine-protein kinase involved in the control of the eukaryotic cell cycle, whose activity is controlled by an associated cyclin. Acts as a cell-cycle regulator of Wnt signaling pathway during G2/M phase by mediating the phosphorylation of LRP6 at 'Ser-1490', leading to the activation of the Wnt signaling pathway. Acts as a regulator of cell cycle progression and cell proliferation via its interaction with CCDN3. Phosphorylates RB1 in vitro, however the relevance of such result remains to be confirmed in vivo. May also play a role in meiosis, neuron differentiation and may indirectly act as a negative regulator of insulin-responsive glucose transport. This Callithrix jacchus (White-tufted-ear marmoset) protein is Cyclin-dependent kinase 14 (CDK14).